A 367-amino-acid chain; its full sequence is UDP-N-acetylenolpyruvoylglucosamine reductase (367 aa).

One can recognise an FAD-binding PCMH-type domain in the interval 29 to 205; sequence VGPVAQRVIT…LEVEFKLDAS (177 aa). The active site involves R177. S260 functions as the Proton donor in the catalytic mechanism. Residue E359 is part of the active site.

This sequence belongs to the MurB family. The cofactor is FAD.

The protein localises to the cytoplasm. The enzyme catalyses UDP-N-acetyl-alpha-D-muramate + NADP(+) = UDP-N-acetyl-3-O-(1-carboxyvinyl)-alpha-D-glucosamine + NADPH + H(+). The protein operates within cell wall biogenesis; peptidoglycan biosynthesis. Functionally, cell wall formation. The chain is UDP-N-acetylenolpyruvoylglucosamine reductase from Mycobacterium leprae (strain Br4923).